The following is an 89-amino-acid chain: Small ribosomal subunit protein uS15 (89 aa).

Residues 1–25 (MSLDTTEKQQLINTHQTHGTDTGSA) are disordered. Positions 8–25 (KQQLINTHQTHGTDTGSA) are enriched in polar residues.

The protein belongs to the universal ribosomal protein uS15 family. As to quaternary structure, part of the 30S ribosomal subunit. Forms a bridge to the 50S subunit in the 70S ribosome, contacting the 23S rRNA.

Its function is as follows. One of the primary rRNA binding proteins, it binds directly to 16S rRNA where it helps nucleate assembly of the platform of the 30S subunit by binding and bridging several RNA helices of the 16S rRNA. In terms of biological role, forms an intersubunit bridge (bridge B4) with the 23S rRNA of the 50S subunit in the ribosome. The protein is Small ribosomal subunit protein uS15 of Parasynechococcus marenigrum (strain WH8102).